The chain runs to 343 residues: Anthranilate phosphoribosyltransferase (343 aa).

5-phospho-alpha-D-ribose 1-diphosphate-binding positions include G79, 82-83 (GD), T87, 89-92 (NVST), 106-114 (KHGNRAASS), and S118. Residue G79 participates in anthranilate binding. Position 91 (S91) interacts with Mg(2+). N109 serves as a coordination point for anthranilate. R164 serves as a coordination point for anthranilate. The Mg(2+) site is built by D223 and E224.

Belongs to the anthranilate phosphoribosyltransferase family. In terms of assembly, homodimer. The cofactor is Mg(2+).

The catalysed reaction is N-(5-phospho-beta-D-ribosyl)anthranilate + diphosphate = 5-phospho-alpha-D-ribose 1-diphosphate + anthranilate. It participates in amino-acid biosynthesis; L-tryptophan biosynthesis; L-tryptophan from chorismate: step 2/5. In terms of biological role, catalyzes the transfer of the phosphoribosyl group of 5-phosphorylribose-1-pyrophosphate (PRPP) to anthranilate to yield N-(5'-phosphoribosyl)-anthranilate (PRA). In Metallosphaera sedula (strain ATCC 51363 / DSM 5348 / JCM 9185 / NBRC 15509 / TH2), this protein is Anthranilate phosphoribosyltransferase.